Here is a 398-residue protein sequence, read N- to C-terminus: Tryptophan synthase beta chain (398 aa).

K88 is modified (N6-(pyridoxal phosphate)lysine).

It belongs to the TrpB family. Tetramer of two alpha and two beta chains. It depends on pyridoxal 5'-phosphate as a cofactor.

The enzyme catalyses (1S,2R)-1-C-(indol-3-yl)glycerol 3-phosphate + L-serine = D-glyceraldehyde 3-phosphate + L-tryptophan + H2O. It participates in amino-acid biosynthesis; L-tryptophan biosynthesis; L-tryptophan from chorismate: step 5/5. In terms of biological role, the beta subunit is responsible for the synthesis of L-tryptophan from indole and L-serine. The sequence is that of Tryptophan synthase beta chain from Histophilus somni (strain 2336) (Haemophilus somnus).